Consider the following 100-residue polypeptide: Probable DNA-binding protein HU (100 aa).

The protein belongs to the bacterial histone-like protein family.

Its function is as follows. Histone-like DNA-binding protein which is capable of wrapping DNA to stabilize it, and thus to prevent its denaturation under extreme environmental conditions. The polypeptide is Probable DNA-binding protein HU (hup) (Chlamydia muridarum (strain MoPn / Nigg)).